The chain runs to 194 residues: Fe/S biogenesis protein NfuA (194 aa).

[4Fe-4S] cluster is bound by residues Cys151 and Cys154.

This sequence belongs to the NfuA family. As to quaternary structure, homodimer. The cofactor is [4Fe-4S] cluster.

Involved in iron-sulfur cluster biogenesis. Binds a 4Fe-4S cluster, can transfer this cluster to apoproteins, and thereby intervenes in the maturation of Fe/S proteins. Could also act as a scaffold/chaperone for damaged Fe/S proteins. The chain is Fe/S biogenesis protein NfuA from Mannheimia succiniciproducens (strain KCTC 0769BP / MBEL55E).